The following is a 224-amino-acid chain: Steroid receptor RNA activator 1 (224 aa).

Disordered regions lie at residues 1–90 (MAEL…EPTS) and 201–224 (AANE…QQAS). Ser48, Ser57, and Ser75 each carry phosphoserine. A compositionally biased stretch (pro residues) spans 58–76 (PGPPPMGPPPPSSKAPRSP). Positions 201 to 215 (AANEEKSAATAEKNH) are enriched in basic and acidic residues.

It belongs to the SRA1 family. SRA1 RNA exists in a ribonucleoprotein complex containing NCOA1. The RNA also forms a complex with PUS1 and RARG in the nucleus. Interacts with AR. As to expression, highly expressed in liver and skeletal muscle and to a lesser extent in brain. Also expressed in both normal and tumorigenic breast epithelial cell lines. Significantly up-regulated in human tumors of the breast, ovary, and uterus.

The protein resides in the nucleus. It is found in the cytoplasm. Its function is as follows. Functional RNA which acts as a transcriptional coactivator that selectively enhances steroid receptor-mediated transactivation ligand-independently through a mechanism involving the modulating N-terminal domain (AF-1) of steroid receptors. Also mediates transcriptional coactivation of steroid receptors ligand-dependently through the steroid-binding domain (AF-2). Enhances cellular proliferation and differentiation and promotes apoptosis in vivo. May play a role in tumorigenesis. In Homo sapiens (Human), this protein is Steroid receptor RNA activator 1.